We begin with the raw amino-acid sequence, 140 residues long: MEWMKIDQVAKRSGLTKRTIRFYEEIGLIPAPKRTDGGVRLYSEDDMEELEKVISTKEVLGFSLQELQHFMETSRQLELNKEGYLLSLDPKERKEKLEEIQETLNHQLDLIDEKIRTFQSFKERLQGMKGKAERAIQSIE.

The HTH merR-type domain maps to 1–73 (MEWMKIDQVA…LQELQHFMET (73 aa)). The segment at residues 6–25 (IDQVAKRSGLTKRTIRFYEE) is a DNA-binding region (H-T-H motif).

In terms of biological role, repressor of the yfmOP operon. A mutation in yfmP leads to overexpression of yfmO, probably causing a decrease in cellular copper that is eventually responsible for a reduced copper induction of copZA. In Bacillus subtilis (strain 168), this protein is HTH-type transcriptional regulator YfmP (yfmP).